A 323-amino-acid chain; its full sequence is MDTLRIAVNGVSYNEASEIYKPHADPFTGPITNLAPWNFAVLATLMFVITSLSLFENFTVMLATYKFKQLRQPLNYIIVNLSLADFLVSLTGGTISFLTNARGYFFLGNWACVLEGFAVTYFGIVAMWSLAVLSFERYFVICRPLGNVRLRGKHAALGLLFVWTFSFIWTIPPVFGWCSYTVSKIGTTCEPNWYSNNIWNHTYIITFFVTCFIMPLGMIIYCYGKLLQKLRKVSHDRLGNAKKPERQVSRMVVVMIVAYLVGWTPYAAFSIIVTACPTIYLDPRLAAAPAFFSKTAAVYNPVIYVFMNKQVSTQLNWGFWSRA.

Over 1 to 38 the chain is Extracellular; it reads MDTLRIAVNGVSYNEASEIYKPHADPFTGPITNLAPWN. A helical membrane pass occupies residues 39–63; sequence FAVLATLMFVITSLSLFENFTVMLA. Residues 64–75 are Cytoplasmic-facing; that stretch reads TYKFKQLRQPLN. Residues 76–100 form a helical membrane-spanning segment; sequence YIIVNLSLADFLVSLTGGTISFLTN. Residues 101–115 are Extracellular-facing; the sequence is ARGYFFLGNWACVLE. C112 and C189 are joined by a disulfide. Residues 116–135 form a helical membrane-spanning segment; sequence GFAVTYFGIVAMWSLAVLSF. At 136–154 the chain is on the cytoplasmic side; sequence ERYFVICRPLGNVRLRGKH. Residues 155 to 178 traverse the membrane as a helical segment; that stretch reads AALGLLFVWTFSFIWTIPPVFGWC. The Extracellular segment spans residues 179–202; the sequence is SYTVSKIGTTCEPNWYSNNIWNHT. N-linked (GlcNAc...) asparagine glycosylation occurs at N200. A helical transmembrane segment spans residues 203–230; it reads YIITFFVTCFIMPLGMIIYCYGKLLQKL. The Cytoplasmic segment spans residues 231-250; that stretch reads RKVSHDRLGNAKKPERQVSR. The chain crosses the membrane as a helical span at residues 251 to 274; sequence MVVVMIVAYLVGWTPYAAFSIIVT. Over 275–282 the chain is Extracellular; it reads ACPTIYLD. A helical membrane pass occupies residues 283–307; the sequence is PRLAAAPAFFSKTAAVYNPVIYVFM. K294 carries the N6-(retinylidene)lysine modification. At 308-323 the chain is on the cytoplasmic side; it reads NKQVSTQLNWGFWSRA.

This sequence belongs to the G-protein coupled receptor 1 family. Opsin subfamily. Phosphorylated on some or all of the serine and threonine residues present in the C-terminal region.

Its subcellular location is the membrane. The chain is Vertebrate ancient opsin from Salmo salar (Atlantic salmon).